Reading from the N-terminus, the 444-residue chain is Acyl-CoA 6-desaturase (444 aa).

The interval 1–21 is disordered; the sequence is MGKGGNQGEGSTERQAPMPTF. Residues 1 to 130 are Cytoplasmic-facing; that stretch reads MGKGGNQGEG…EDMNLFKTNH (130 aa). In terms of domain architecture, Cytochrome b5 heme-binding spans 18–95; sequence MPTFRWEEIQ…LKPLLIGELA (78 aa). The helical transmembrane segment at 131–151 threads the bilayer; that stretch reads LFFFLLLSHIIVMESLAWFIL. Position 152 (serine 152) is a topological domain, lumenal. Residues 153–173 traverse the membrane as a helical segment; that stretch reads YFGTGWIPTLVTAFVLATSQA. Residues 174 to 264 are Cytoplasmic-facing; the sequence is QAGWLQHDYG…KYLPYNHQHE (91 aa). The short motif at 180–184 is the Histidine box-1 element; the sequence is HDYGH. The short motif at 217 to 221 is the Histidine box-2 element; that stretch reads HFQHH. The helical transmembrane segment at 265–285 threads the bilayer; it reads YFFLIGPPLLIPMYFQYQIIM. Topologically, residues 286–305 are lumenal; the sequence is TMISRRDWVDLAWAISYYMR. Residues 306-326 form a helical membrane-spanning segment; sequence FFYTYIPFYGILGALVFLNFI. Residues 327–444 are Cytoplasmic-facing; sequence RFLESHWFVW…ELWLDAYLHK (118 aa). The short motif at 382–386 is the Histidine box-3 element; sequence QIEHH.

It belongs to the fatty acid desaturase type 1 family. Highly expressed in the adrenal gland, liver, brain, and testis, tissues where lipogenesis and steroidogenesis are active. Also detected in lung, heart, and skeletal muscle.

Its subcellular location is the endoplasmic reticulum membrane. It carries out the reaction (9Z,12Z)-octadecadienoyl-CoA + 2 Fe(II)-[cytochrome b5] + O2 + 2 H(+) = (6Z,9Z,12Z)-octadecatrienoyl-CoA + 2 Fe(III)-[cytochrome b5] + 2 H2O. The enzyme catalyses (9Z,12Z,15Z)-octadecatrienoyl-CoA + 2 Fe(II)-[cytochrome b5] + O2 + 2 H(+) = (6Z,9Z,12Z,15Z)-octadecatetraenoyl-CoA + 2 Fe(III)-[cytochrome b5] + 2 H2O. The catalysed reaction is (9Z,12Z,15Z,18Z,21Z)-tetracosapentaenoyl-CoA + 2 Fe(II)-[cytochrome b5] + O2 + 2 H(+) = (6Z,9Z,12Z,15Z,18Z,21Z)-tetracosahexaenoyl-CoA + 2 Fe(III)-[cytochrome b5] + 2 H2O. It catalyses the reaction (11E)-octadecenoyl-CoA + 2 Fe(II)-[cytochrome b5] + O2 + 2 H(+) = (6Z,11E)-octadecadienoyl-CoA + 2 Fe(III)-[cytochrome b5] + 2 H2O. It carries out the reaction (11Z,14Z)-eicosadienoyl-CoA + 2 Fe(II)-[cytochrome b5] + O2 + 2 H(+) = (8Z,11Z,14Z)-eicosatrienoyl-CoA + 2 Fe(III)-[cytochrome b5] + 2 H2O. The enzyme catalyses (11Z,14Z,17Z)-eicosatrienoyl-CoA + 2 Fe(II)-[cytochrome b5] + O2 + 2 H(+) = (8Z,11Z,14Z,17Z)-eicosatetraenoyl-CoA + 2 Fe(III)-[cytochrome b5] + 2 H2O. It participates in lipid metabolism; polyunsaturated fatty acid biosynthesis. Functionally, involved in the biosynthesis of highly unsaturated fatty acids (HUFA) from the essential polyunsaturated fatty acids (PUFA) linoleic acid (LA) (18:2n-6) and alpha-linolenic acid (ALA) (18:3n-3) precursors, acting as a fatty acyl-coenzyme A (CoA) desaturase that introduces a cis double bond at carbon 6 of the fatty acyl chain. Catalyzes the first and rate limiting step in this pathway which is the desaturation of LA (18:2n-6) and ALA (18:3n-3) into gamma-linoleate (GLA) (18:3n-6) and stearidonate (18:4n-3), respectively. Subsequently, in the biosynthetic pathway of HUFA n-3 series, it desaturates tetracosapentaenoate (24:5n-3) to tetracosahexaenoate (24:6n-3), which is then converted to docosahexaenoate (DHA)(22:6n-3), an important lipid for nervous system function. It can also desaturate (11E)-octadecenoate (trans-vaccenoate) at carbon 6 generating (6Z,11E)-octadecadienoate. In addition to Delta-6 activity, this enzyme exhibits Delta-8 activity with slight biases toward n-3 fatty acyl-CoA substrates. In Mus musculus (Mouse), this protein is Acyl-CoA 6-desaturase.